Consider the following 593-residue polypeptide: Elongation factor 4 (593 aa).

The tr-type G domain maps to 2-181 (DKIRNFCIIA…AVIERIPHPQ (180 aa)). Residues 14 to 19 (DHGKST) and 128 to 131 (NKCD) contribute to the GTP site.

Belongs to the TRAFAC class translation factor GTPase superfamily. Classic translation factor GTPase family. LepA subfamily.

The protein localises to the cell inner membrane. The enzyme catalyses GTP + H2O = GDP + phosphate + H(+). Functionally, required for accurate and efficient protein synthesis under certain stress conditions. May act as a fidelity factor of the translation reaction, by catalyzing a one-codon backward translocation of tRNAs on improperly translocated ribosomes. Back-translocation proceeds from a post-translocation (POST) complex to a pre-translocation (PRE) complex, thus giving elongation factor G a second chance to translocate the tRNAs correctly. Binds to ribosomes in a GTP-dependent manner. This is Elongation factor 4 from Bacteroides fragilis (strain ATCC 25285 / DSM 2151 / CCUG 4856 / JCM 11019 / LMG 10263 / NCTC 9343 / Onslow / VPI 2553 / EN-2).